We begin with the raw amino-acid sequence, 187 residues long: Casparian strip membrane protein 5 (187 aa).

At 1 to 24 (MKSGQAEIMETSKGIQKSGLMSRR) the chain is on the cytoplasmic side. A helical membrane pass occupies residues 25–45 (IAILEFILRIVAFFNTIGSAI). Over 46–74 (LMGTTHETLPFFTQFIRFQAEYNDLPALT) the chain is Extracellular. Residues 75–95 (FFVVANAVVSGYLILSLTLAF) traverse the membrane as a helical segment. Residues 96–107 (VHIVKRKTQNTR) are Cytoplasmic-facing. Residues 108 to 128 (ILLIILDVAMLGLLTSGASSA) form a helical membrane-spanning segment. The Extracellular segment spans residues 129-161 (AAIVYLAHNGNNKTNWFAICQQFNSFCERISGS). The N-linked (GlcNAc...) asparagine glycan is linked to N140. The chain crosses the membrane as a helical span at residues 162–182 (LIGSFIAIVLLILLILLSAIA). Topologically, residues 183-187 (LSRRH) are cytoplasmic.

The protein belongs to the Casparian strip membrane proteins (CASP) family. In terms of assembly, homodimer and heterodimers with other CASP proteins. Interacts with CASP1, CASP3 and CASP4.

Its subcellular location is the cell membrane. Its function is as follows. Regulates membrane-cell wall junctions and localized cell wall deposition. Required for establishment of the Casparian strip membrane domain (CSD) and the subsequent formation of Casparian strips, a cell wall modification of the root endodermis that determines an apoplastic barrier between the intraorganismal apoplasm and the extraorganismal apoplasm and prevents lateral diffusion. The chain is Casparian strip membrane protein 5 (CASP5) from Arabidopsis thaliana (Mouse-ear cress).